The following is a 288-amino-acid chain: Probable anion import ATP-binding protein HVO_1886 (288 aa).

A compositionally biased stretch (basic and acidic residues) spans Met1–Glu18. The disordered stretch occupies residues Met1–Lys33. The ABC transporter domain occupies Leu36 to Val282. Gly68 to Thr75 lines the ATP pocket.

The protein belongs to the ABC transporter superfamily. As to quaternary structure, the complex is composed of two ATP-binding proteins (HVO_1886), two transmembrane proteins (HVO_1887) and a solute-binding protein (HVO_1888).

It localises to the cell membrane. Its function is as follows. Part of an ABC transporter complex involved in anions import. Responsible for energy coupling to the transport system. In Haloferax volcanii (strain ATCC 29605 / DSM 3757 / JCM 8879 / NBRC 14742 / NCIMB 2012 / VKM B-1768 / DS2) (Halobacterium volcanii), this protein is Probable anion import ATP-binding protein HVO_1886.